The following is a 650-amino-acid chain: Zinc finger CCCH domain-containing protein 55 (650 aa).

The tract at residues 67-162 (NSPSSTPTSP…THSGSADAAG (96 aa)) is disordered. The span at 105-128 (SPSSPSSTSPWSFNNCINGNNGNN) shows a compositional bias: low complexity. Polar residues predominate over residues 141-154 (PFSSHQSNGLSATH). The C3H1-type zinc-finger motif lies at 232-254 (PCVYFSRGLCKNGESCKFIHGGY). The 77-residue stretch at 357–433 (RQIYLTFPAD…RVLVKPYKEK (77 aa)) folds into the RRM domain. A disordered region spans residues 566-650 (PVVNPMSVNN…PPVTTNNLMQ (85 aa)). Over residues 581 to 590 (AKEETNKSEL) the composition is skewed to basic and acidic residues.

This chain is Zinc finger CCCH domain-containing protein 55, found in Arabidopsis thaliana (Mouse-ear cress).